Consider the following 790-residue polypeptide: Pentatricopeptide repeat-containing protein OTP51, chloroplastic (790 aa).

A chloroplast-targeting transit peptide spans 1–56 (MATTSPCAAPSPSLRCPLALSHPFASPPPPPALRLAGPKLLPGRLAVSPPPGIPAV). 10 PPR repeats span residues 182–216 (NFAL…GRVP), 217–254 (AEST…GGYK), 256–296 (RLSL…NLDV), 299–333 (DVYA…GFDE), 334–368 (GIDV…GSDL), 369–403 (PVQA…NIPP), 404–438 (NVAS…DMKH), 439–469 (LMPA…CIAR), 473–507 (NRIL…GMIG), and 509–543 (NTKS…KYDV). Positions 762-790 (GSSIGSDGTQDTDTDSDDDMQMSDTERDE) are disordered. Over residues 771–790 (QDTDTDSDDDMQMSDTERDE) the composition is skewed to acidic residues.

It belongs to the PPR family. P subfamily.

It is found in the plastid. The protein resides in the chloroplast. In terms of biological role, promotes the splicing of group II introns in chloroplasts. Required for the splicing of intron 2 of plastid ycf3 transcripts, a factor required for the assembly of photosystem I (PSI). Involved in the splicing of atpF, ndhA, petB and rps16 chloroplastic transcripts. Required for the assembly of PSI. This chain is Pentatricopeptide repeat-containing protein OTP51, chloroplastic, found in Oryza sativa subsp. japonica (Rice).